Here is a 501-residue protein sequence, read N- to C-terminus: MTNHSVILCILDGWGNGENNQFNAIAQAYKPCWDNITLQYPKSHLITHGSSVGLPDGQIGNSEVGHVNLGSGRIVLQDLCKINNEIKYIKDNVYLLEFINKIKKNNGICHIAGLLSDGGVHSSYTHILDIINTLSDFQIQVAVHIFLDGRDTPPISATKYISILCEHIKHLNNINIATLSGRYYAMDRDNRLDRTTKAYNAIAFANAKRYEDPLTAVQDSYNLGITDEFILPCIIGNYQGMKPQDGFIMTNFRSDRVIQIIKMIIGDIKTDNHITLDNTIGMVKYSDKINIPCLFPNNNITNTLGEVIANNQLHQLRIAETEKYAHVTFFFNGGKEDMFENEDRIIIPSPSVATYNLTPEMSAEKVTDTIIEKIKLQKYSLIIVNYANADMVGHTGNIDATKQAITTIDQCLSKILNCIQNTNYVLVITSDHGNAEEMFDVKNNMPYTAHTLNPVPFIICNYNKKIRLKNGRLCDVAPTILEILNLAKPKEMTGVSLIEQV.

Residues aspartate 12 and serine 62 each contribute to the Mn(2+) site. Serine 62 acts as the Phosphoserine intermediate in catalysis. Substrate-binding positions include histidine 121, 150 to 151 (RD), arginine 182, arginine 188, 253 to 256 (RSDR), and lysine 323. The Mn(2+) site is built by aspartate 390, histidine 394, aspartate 431, histidine 432, and histidine 450.

The protein belongs to the BPG-independent phosphoglycerate mutase family. Monomer. The cofactor is Mn(2+).

The enzyme catalyses (2R)-2-phosphoglycerate = (2R)-3-phosphoglycerate. Its pathway is carbohydrate degradation; glycolysis; pyruvate from D-glyceraldehyde 3-phosphate: step 3/5. Catalyzes the interconversion of 2-phosphoglycerate and 3-phosphoglycerate. This chain is 2,3-bisphosphoglycerate-independent phosphoglycerate mutase, found in Ehrlichia canis (strain Jake).